Here is a 333-residue protein sequence, read N- to C-terminus: Foldase protein PrsA (333 aa).

Residues 1 to 22 form the signal peptide; the sequence is MKSAKQIATALLVGMFTFSAVG. The N-palmitoyl cysteine moiety is linked to residue cysteine 23. A lipid anchor (S-diacylglycerol cysteine) is attached at cysteine 23. One can recognise a PpiC domain in the interval 192–283; it reads PNTVHLAHIL…FGWHVIKCIK (92 aa).

Belongs to the PrsA family.

The protein localises to the cell membrane. The catalysed reaction is [protein]-peptidylproline (omega=180) = [protein]-peptidylproline (omega=0). Plays a major role in protein secretion by helping the post-translocational extracellular folding of several secreted proteins. The chain is Foldase protein PrsA from Clostridium acetobutylicum (strain ATCC 824 / DSM 792 / JCM 1419 / IAM 19013 / LMG 5710 / NBRC 13948 / NRRL B-527 / VKM B-1787 / 2291 / W).